Consider the following 343-residue polypeptide: uncharacterized protein (343 aa).

Disordered regions lie at residues 1–27 and 205–247; these read MIREWENGCPKIGKQRARDSRAQERMT and SGGL…SKRQ. The span at 16–27 shows a compositional bias: basic and acidic residues; it reads RARDSRAQERMT. A compositionally biased stretch (acidic residues) spans 219–228; sequence GQDDGNTDDG. Residues 229–247 are compositionally biased toward basic and acidic residues; that stretch reads NDVHQKGRGEVESKTSKRQ.

Dispensable for normal development and fertility. This is an uncharacterized protein from Bos taurus (Bovine).